The following is a 275-amino-acid chain: Probable CCR4-associated factor 1 homolog 7 (275 aa).

4 residues coordinate a divalent metal cation: Asp-40, Glu-42, Asp-167, and Asp-236.

This sequence belongs to the CAF1 family. As to quaternary structure, component of the CCR4-NOT complex, at least composed of CRR4 and CAF1 proteins. Requires a divalent metal cation as cofactor.

Its subcellular location is the nucleus. It localises to the cytoplasm. The enzyme catalyses Exonucleolytic cleavage of poly(A) to 5'-AMP.. Functionally, ubiquitous transcription factor required for a diverse set of processes. It is a component of the CCR4 complex involved in the control of gene expression. In Arabidopsis thaliana (Mouse-ear cress), this protein is Probable CCR4-associated factor 1 homolog 7 (CAF1-7).